The primary structure comprises 145 residues: Histone H3-like centromeric protein A (145 aa).

Basic residues predominate over residues 1–19 (MPRHTSAHKRKPSTPRRRS). A disordered region spans residues 1-54 (MPRHTSAHKRKPSTPRRRSPPASLPPPAGSRTRRHSGPSGSSPRKKHKFRPGTR). Residue Ser-19 is modified to Phosphoserine. An H3-like region spans residues 51–145 (PGTRALMEIR…ARRIRGVEHM (95 aa)).

Belongs to the histone H3 family. As to quaternary structure, component of centromeric nucleosomes, where DNA is wrapped around a histone octamer core. The octamer contains two molecules each of H2A, H2B, CENPA and H4 assembled in one CENPA-H4 heterotetramer and two H2A-H2B heterodimers. CENPA modulates the DNA-binding characteristics of nucleosomes so that protruding DNA ends have higher flexibility than in nucleosomes containing conventional histone H3.

It localises to the nucleus. The protein localises to the chromosome. It is found in the centromere. In terms of biological role, histone H3-like nucleosomal protein that is specifically found in centromeric nucleosomes. Replaces conventional H3 in the nucleosome core of centromeric chromatin that serves as an assembly site for the inner kinetochore. The presence of CENPA subtly modifies the nucleosome structure and the way DNA is wrapped around the nucleosome and gives rise to protruding DNA ends that are less well-ordered and rigid compared to nucleosomes containing histone H3. May serve as an epigenetic mark that propagates centromere identity through replication and cell division. Required for recruitment and assembly of kinetochore proteins, and as a consequence required for progress through mitosis, chromosome segregation and cytokinesis. In Danio rerio (Zebrafish), this protein is Histone H3-like centromeric protein A (cenpa).